We begin with the raw amino-acid sequence, 77 residues long: Omega-conotoxin-like 6 (77 aa).

The N-terminal stretch at M1–A22 is a signal peptide. The propeptide occupies D23 to G50. Intrachain disulfides connect C46-C61, C53-C64, and C60-C71.

This sequence belongs to the conotoxin O1 superfamily. In terms of tissue distribution, expressed by the venom duct.

Its subcellular location is the secreted. Its function is as follows. Omega-conotoxins act at presynaptic membranes, they bind and block voltage-gated calcium channels (Cav). This is Omega-conotoxin-like 6 from Conus striatus (Striated cone).